Here is a 200-residue protein sequence, read N- to C-terminus: ATP-dependent Clp protease proteolytic subunit 3 (200 aa).

The active-site Nucleophile is the Ser101. His126 is an active-site residue.

This sequence belongs to the peptidase S14 family. Fourteen ClpP subunits assemble into 2 heptameric rings which stack back to back to give a disk-like structure with a central cavity, resembling the structure of eukaryotic proteasomes.

Its subcellular location is the cytoplasm. It carries out the reaction Hydrolysis of proteins to small peptides in the presence of ATP and magnesium. alpha-casein is the usual test substrate. In the absence of ATP, only oligopeptides shorter than five residues are hydrolyzed (such as succinyl-Leu-Tyr-|-NHMec, and Leu-Tyr-Leu-|-Tyr-Trp, in which cleavage of the -Tyr-|-Leu- and -Tyr-|-Trp bonds also occurs).. Cleaves peptides in various proteins in a process that requires ATP hydrolysis. Has a chymotrypsin-like activity. Plays a major role in the degradation of misfolded proteins. This Synechococcus sp. (strain CC9902) protein is ATP-dependent Clp protease proteolytic subunit 3.